A 991-amino-acid polypeptide reads, in one-letter code: Antigenic heat-stable 120 kDa protein (991 aa).

Disordered regions lie at residues 1 to 37, 54 to 73, and 348 to 384; these read DTSE…TPAL, TPSM…TSDP, and GQSK…TNQP. A compositionally biased stretch (basic and acidic residues) spans 12 to 29; the sequence is EYTEEQKQTEEQEQKEFL. Positions 348-373 are enriched in polar residues; that stretch reads GQSKEQPLITPQQTTSSSVEPPQYKQ.

It is found in the cytoplasm. The chain is Antigenic heat-stable 120 kDa protein (sca4) from Rickettsia sibirica.